A 388-amino-acid polypeptide reads, in one-letter code: Succinate--CoA ligase [ADP-forming] subunit beta (388 aa).

One can recognise an ATP-grasp domain in the interval 9–244 (KQLFARYGLP…HSQEDEREAH (236 aa)). ATP is bound by residues Lys46, 53–55 (GRG), Glu99, Thr102, and Glu107. Residues Asn199 and Asp213 each coordinate Mg(2+). Substrate contacts are provided by residues Asn264 and 321–323 (GIV).

The protein belongs to the succinate/malate CoA ligase beta subunit family. Heterotetramer of two alpha and two beta subunits. Requires Mg(2+) as cofactor.

It catalyses the reaction succinate + ATP + CoA = succinyl-CoA + ADP + phosphate. The catalysed reaction is GTP + succinate + CoA = succinyl-CoA + GDP + phosphate. Its pathway is carbohydrate metabolism; tricarboxylic acid cycle; succinate from succinyl-CoA (ligase route): step 1/1. Functionally, succinyl-CoA synthetase functions in the citric acid cycle (TCA), coupling the hydrolysis of succinyl-CoA to the synthesis of either ATP or GTP and thus represents the only step of substrate-level phosphorylation in the TCA. The beta subunit provides nucleotide specificity of the enzyme and binds the substrate succinate, while the binding sites for coenzyme A and phosphate are found in the alpha subunit. In Sodalis glossinidius (strain morsitans), this protein is Succinate--CoA ligase [ADP-forming] subunit beta.